A 569-amino-acid chain; its full sequence is Urease subunit alpha (569 aa).

Residues 131-569 form the Urease domain; it reads GGIDTHIHFI…LPLAQRYLLL (439 aa). Ni(2+) is bound by residues histidine 136, histidine 138, and lysine 219. At lysine 219 the chain carries N6-carboxylysine. Substrate is bound at residue histidine 221. Residues histidine 248 and histidine 274 each contribute to the Ni(2+) site. The active-site Proton donor is the histidine 322. Aspartate 362 contacts Ni(2+).

It belongs to the metallo-dependent hydrolases superfamily. Urease alpha subunit family. Heterotrimer of UreA (gamma), UreB (beta) and UreC (alpha) subunits. Three heterotrimers associate to form the active enzyme. It depends on Ni cation as a cofactor. In terms of processing, carboxylation allows a single lysine to coordinate two nickel ions.

It is found in the cytoplasm. It catalyses the reaction urea + 2 H2O + H(+) = hydrogencarbonate + 2 NH4(+). It functions in the pathway nitrogen metabolism; urea degradation; CO(2) and NH(3) from urea (urease route): step 1/1. This is Urease subunit alpha from Synechococcus sp. (strain CC9311).